We begin with the raw amino-acid sequence, 576 residues long: Urease subunit alpha (576 aa).

Positions 132–576 constitute a Urease domain; that stretch reads GGIDTHIHFI…LPMAQRYFLF (445 aa). Ni(2+) is bound by residues His-137, His-139, and Lys-220. Lys-220 carries the post-translational modification N6-carboxylysine. Residue His-222 participates in substrate binding. Ni(2+)-binding residues include His-249 and His-275. Catalysis depends on His-323, which acts as the Proton donor. Asp-363 serves as a coordination point for Ni(2+).

The protein belongs to the metallo-dependent hydrolases superfamily. Urease alpha subunit family. In terms of assembly, heterotrimer of UreA (gamma), UreB (beta) and UreC (alpha) subunits. Three heterotrimers associate to form the active enzyme. Ni cation serves as cofactor. In terms of processing, carboxylation allows a single lysine to coordinate two nickel ions.

Its subcellular location is the cytoplasm. It catalyses the reaction urea + 2 H2O + H(+) = hydrogencarbonate + 2 NH4(+). It functions in the pathway nitrogen metabolism; urea degradation; CO(2) and NH(3) from urea (urease route): step 1/1. The polypeptide is Urease subunit alpha (Paenarthrobacter aurescens (strain TC1)).